The chain runs to 577 residues: Anthranilate synthase alpha subunit 1, chloroplastic (577 aa).

The transit peptide at 1–34 (MASLVLSLRIAPSTPPLGLGGGRFRGRRGAVACR) directs the protein to the chloroplast.

The protein belongs to the anthranilate synthase component I family. Heterotetramer consisting of two non-identical subunits: a beta subunit and a large alpha subunit.

It localises to the plastid. The protein localises to the chloroplast. The catalysed reaction is chorismate + L-glutamine = anthranilate + pyruvate + L-glutamate + H(+). The protein operates within amino-acid biosynthesis; L-tryptophan biosynthesis; L-tryptophan from chorismate: step 1/5. Feedback inhibition by tryptophan. Functionally, part of a heterotetrameric complex that catalyzes the two-step biosynthesis of anthranilate, an intermediate in the biosynthesis of L-tryptophan. In the first step, the glutamine-binding beta subunit of anthranilate synthase (AS) provides the glutamine amidotransferase activity which generates ammonia as a substrate that, along with chorismate, is used in the second step, catalyzed by the large alpha subunit of AS to produce anthranilate. The polypeptide is Anthranilate synthase alpha subunit 1, chloroplastic (Oryza sativa subsp. japonica (Rice)).